Consider the following 469-residue polypeptide: Sulfate adenylyltransferase subunit 1 (469 aa).

In terms of domain architecture, tr-type G spans 22 to 224 (KDLMRFITCG…NMTWYPGSPL (203 aa)). The tract at residues 31 to 38 (GSVDDGKS) is G1. GTP is bound at residue 31–38 (GSVDDGKS). The interval 89-93 (GITID) is G2. Residues 110 to 113 (DTPG) are G3. GTP is bound by residues 110-114 (DTPGH) and 165-168 (NKMD). The G4 stretch occupies residues 165–168 (NKMD). A G5 region spans residues 202–204 (SAL).

Belongs to the TRAFAC class translation factor GTPase superfamily. Classic translation factor GTPase family. CysN/NodQ subfamily. As to quaternary structure, heterodimer composed of CysD, the smaller subunit, and CysN.

The catalysed reaction is sulfate + ATP + H(+) = adenosine 5'-phosphosulfate + diphosphate. It participates in sulfur metabolism; hydrogen sulfide biosynthesis; sulfite from sulfate: step 1/3. Functionally, with CysD forms the ATP sulfurylase (ATPS) that catalyzes the adenylation of sulfate producing adenosine 5'-phosphosulfate (APS) and diphosphate, the first enzymatic step in sulfur assimilation pathway. APS synthesis involves the formation of a high-energy phosphoric-sulfuric acid anhydride bond driven by GTP hydrolysis by CysN coupled to ATP hydrolysis by CysD. The protein is Sulfate adenylyltransferase subunit 1 of Psychromonas ingrahamii (strain DSM 17664 / CCUG 51855 / 37).